The chain runs to 156 residues: Ribosomal RNA large subunit methyltransferase H (156 aa).

Residues Leu-73, Gly-104, and Leu-123 to Leu-128 contribute to the S-adenosyl-L-methionine site.

Belongs to the RNA methyltransferase RlmH family. As to quaternary structure, homodimer.

It is found in the cytoplasm. The enzyme catalyses pseudouridine(1915) in 23S rRNA + S-adenosyl-L-methionine = N(3)-methylpseudouridine(1915) in 23S rRNA + S-adenosyl-L-homocysteine + H(+). Specifically methylates the pseudouridine at position 1915 (m3Psi1915) in 23S rRNA. In Leptothrix cholodnii (strain ATCC 51168 / LMG 8142 / SP-6) (Leptothrix discophora (strain SP-6)), this protein is Ribosomal RNA large subunit methyltransferase H.